The following is a 161-amino-acid chain: Disulfide bond formation protein B (161 aa).

The Cytoplasmic portion of the chain corresponds to 1 to 8; sequence MQANSRTY. Residues 9 to 25 form a helical membrane-spanning segment; it reads FLLIAIVSFAMVGAALY. The Periplasmic portion of the chain corresponds to 26 to 43; that stretch reads MQYAENLQPCPLCIMQRF. Residues Cys35 and Cys38 are joined by a disulfide bond. The chain crosses the membrane as a helical span at residues 44–58; it reads AFIGIGIFSLLAVIA. The Cytoplasmic segment spans residues 59 to 63; it reads QNTRT. The helical transmembrane segment at 64–81 threads the bilayer; the sequence is LWQGLGMLSGVGGIAVAG. Over 82-136 the chain is Periplasmic; that stretch reads YQVALLMNPKASCGIDPLENWVNSLPTAKLLPQVFYSDGLCTAPTPPILGLSIPA. Cys94 and Cys122 are joined by a disulfide. A helical transmembrane segment spans residues 137-155; the sequence is WSLIWLLILTLTLAVGLIR. Topologically, residues 156-161 are cytoplasmic; that stretch reads REKHFR.

The protein belongs to the DsbB family.

The protein resides in the cell inner membrane. Its function is as follows. Required for disulfide bond formation in some periplasmic proteins. Acts by oxidizing the DsbA protein. This Cupriavidus metallidurans (strain ATCC 43123 / DSM 2839 / NBRC 102507 / CH34) (Ralstonia metallidurans) protein is Disulfide bond formation protein B.